We begin with the raw amino-acid sequence, 380 residues long: Lipoyl synthase, mitochondrial (380 aa).

Residues cysteine 104, cysteine 109, cysteine 115, cysteine 135, cysteine 139, cysteine 142, and serine 350 each coordinate [4Fe-4S] cluster. A Radical SAM core domain is found at 120–339 (EHGTQTATIM…ETRGNELGFL (220 aa)).

It belongs to the radical SAM superfamily. Lipoyl synthase family. The cofactor is [4Fe-4S] cluster.

The protein localises to the mitochondrion. It carries out the reaction [[Fe-S] cluster scaffold protein carrying a second [4Fe-4S](2+) cluster] + N(6)-octanoyl-L-lysyl-[protein] + 2 oxidized [2Fe-2S]-[ferredoxin] + 2 S-adenosyl-L-methionine + 4 H(+) = [[Fe-S] cluster scaffold protein] + N(6)-[(R)-dihydrolipoyl]-L-lysyl-[protein] + 4 Fe(3+) + 2 hydrogen sulfide + 2 5'-deoxyadenosine + 2 L-methionine + 2 reduced [2Fe-2S]-[ferredoxin]. It functions in the pathway protein modification; protein lipoylation via endogenous pathway; protein N(6)-(lipoyl)lysine from octanoyl-[acyl-carrier-protein]: step 2/2. Its function is as follows. Catalyzes the radical-mediated insertion of two sulfur atoms into the C-6 and C-8 positions of the octanoyl moiety bound to the lipoyl domains of lipoate-dependent enzymes, thereby converting the octanoylated domains into lipoylated derivatives. The chain is Lipoyl synthase, mitochondrial from Culex quinquefasciatus (Southern house mosquito).